A 403-amino-acid chain; its full sequence is Ribosomal RNA large subunit methyltransferase I (403 aa).

The region spanning 9 to 88 (YPRLVLSKGR…ESIDIAFFTR (80 aa)) is the PUA domain.

The protein belongs to the methyltransferase superfamily. RlmI family.

The protein localises to the cytoplasm. The catalysed reaction is cytidine(1962) in 23S rRNA + S-adenosyl-L-methionine = 5-methylcytidine(1962) in 23S rRNA + S-adenosyl-L-homocysteine + H(+). Its function is as follows. Specifically methylates the cytosine at position 1962 (m5C1962) of 23S rRNA. The sequence is that of Ribosomal RNA large subunit methyltransferase I from Salmonella paratyphi A (strain ATCC 9150 / SARB42).